Reading from the N-terminus, the 601-residue chain is MAKNRNEITEKLTWDLTTIYKTDKEWEAELTRIKSELSLVEETDPGHLLDSAESLLTITEKMLSISQQVEKLYVYASMKNDQDTREAKYQEYQSKATALYVKFGEVYAFYEPEFLKISKEVYNKWLGELQKLKNYDHMFERLFAKKAHILSQKEEKLLAAAGEIFESPSETFEIFDNADIKLPMVKNESDEMIQLTHGNYSSLMESKNRGVRKAAYKALYSNYEQYQHTYAKTLQTNVKVHNLKAQIRSYDSARQAALANNFVPEKVYDVLMEAIHQHLPLLHRYIELRKKILGITDLKMYDIYTPLSNLDYKFNYEDGVKKAEEVLAIFGKEYKGKVKAAFEQRWIDVEENIGKRSGAYSGGSYDTNAFMLLNWQETLDDLFTLVHEMGHSMHSAFTRENQPYVYGDYPIFLAEIASTTNENILTETLLKESKDDKERFALLNHWLDSFRGTVFRQSQFAEFEQKIHEADAAGEVLTSEYLNSLYGEINEKYYNLAAKENPEIQYEWARIPHFYYNFYVFQYATGFAAATFLAEKVVHGSTEDRQKYLEYLKAGSSAYPLEVIAKAGVDMESTDYLDAAFELFENRLSELEKLVEKGVHL.

Position 387 (H387) interacts with Zn(2+). E388 is an active-site residue. Residues H391 and H394 each contribute to the Zn(2+) site.

Belongs to the peptidase M3 family. It depends on Zn(2+) as a cofactor.

Its function is as follows. Hydrolyzes peptides containing between 7 and 17 amino acids with a rather wide specificity. This chain is Oligoendopeptidase F homolog (pepF), found in Lactococcus lactis subsp. lactis (strain IL1403) (Streptococcus lactis).